The chain runs to 161 residues: Crossover junction endodeoxyribonuclease RuvC (161 aa).

Active-site residues include aspartate 9, glutamate 72, and aspartate 144. Positions 9, 72, and 144 each coordinate Mg(2+).

Belongs to the RuvC family. As to quaternary structure, homodimer which binds Holliday junction (HJ) DNA. The HJ becomes 2-fold symmetrical on binding to RuvC with unstacked arms; it has a different conformation from HJ DNA in complex with RuvA. In the full resolvosome a probable DNA-RuvA(4)-RuvB(12)-RuvC(2) complex forms which resolves the HJ. It depends on Mg(2+) as a cofactor.

It localises to the cytoplasm. The enzyme catalyses Endonucleolytic cleavage at a junction such as a reciprocal single-stranded crossover between two homologous DNA duplexes (Holliday junction).. Functionally, the RuvA-RuvB-RuvC complex processes Holliday junction (HJ) DNA during genetic recombination and DNA repair. Endonuclease that resolves HJ intermediates. Cleaves cruciform DNA by making single-stranded nicks across the HJ at symmetrical positions within the homologous arms, yielding a 5'-phosphate and a 3'-hydroxyl group; requires a central core of homology in the junction. The consensus cleavage sequence is 5'-(A/T)TT(C/G)-3'. Cleavage occurs on the 3'-side of the TT dinucleotide at the point of strand exchange. HJ branch migration catalyzed by RuvA-RuvB allows RuvC to scan DNA until it finds its consensus sequence, where it cleaves and resolves the cruciform DNA. This Synechococcus sp. (strain ATCC 27144 / PCC 6301 / SAUG 1402/1) (Anacystis nidulans) protein is Crossover junction endodeoxyribonuclease RuvC.